Reading from the N-terminus, the 321-residue chain is Glucokinase (321 aa).

Residue 8–13 (GDVGGT) coordinates ATP.

This sequence belongs to the bacterial glucokinase family.

It is found in the cytoplasm. It catalyses the reaction D-glucose + ATP = D-glucose 6-phosphate + ADP + H(+). The protein is Glucokinase of Tolumonas auensis (strain DSM 9187 / NBRC 110442 / TA 4).